A 205-amino-acid polypeptide reads, in one-letter code: Proteasome subunit beta (205 aa).

The propeptide at 1–9 is removed in mature form; by autocatalysis; it reads MNQTENMEG. Thr10 functions as the Nucleophile in the catalytic mechanism.

Belongs to the peptidase T1B family. As to quaternary structure, the 20S proteasome core is composed of 14 alpha and 14 beta subunits that assemble into four stacked heptameric rings, resulting in a barrel-shaped structure. The two inner rings, each composed of seven catalytic beta subunits, are sandwiched by two outer rings, each composed of seven alpha subunits. The catalytic chamber with the active sites is on the inside of the barrel. Has a gated structure, the ends of the cylinder being occluded by the N-termini of the alpha-subunits. Is capped at one or both ends by the proteasome regulatory ATPase, PAN.

The protein localises to the cytoplasm. It catalyses the reaction Cleavage of peptide bonds with very broad specificity.. The formation of the proteasomal ATPase PAN-20S proteasome complex, via the docking of the C-termini of PAN into the intersubunit pockets in the alpha-rings, triggers opening of the gate for substrate entry. Interconversion between the open-gate and close-gate conformations leads to a dynamic regulation of the 20S proteasome proteolysis activity. Functionally, component of the proteasome core, a large protease complex with broad specificity involved in protein degradation. The sequence is that of Proteasome subunit beta from Methanosphaera stadtmanae (strain ATCC 43021 / DSM 3091 / JCM 11832 / MCB-3).